The sequence spans 524 residues: Probable pectinesterase/pectinesterase inhibitor 19 (524 aa).

A signal peptide spans 1-22; that stretch reads MLVKVFSFFILMITMVVIGVSK. The interval 23–172 is pectinesterase inhibitor 19; it reads EYCDDKQSCQ…ISRARIALAL (150 aa). The pectinesterase 19 stretch occupies residues 215-510; sequence DVVVAKDGTG…FTVAKLLDGE (296 aa). Asparagine 265 and asparagine 281 each carry an N-linked (GlcNAc...) asparagine glycan. Substrate is bound at residue threonine 290. The active-site Proton donor; for pectinesterase activity is the aspartate 343. Cysteine 357 and cysteine 377 are oxidised to a cystine. Aspartate 364 acts as the Nucleophile; for pectinesterase activity in catalysis. N-linked (GlcNAc...) asparagine glycosylation is present at asparagine 412. Positions 430 and 432 each coordinate substrate.

In the N-terminal section; belongs to the PMEI family. The protein in the C-terminal section; belongs to the pectinesterase family. Expressed in siliques, but not in flower buds.

The protein resides in the secreted. The protein localises to the cell wall. It catalyses the reaction [(1-&gt;4)-alpha-D-galacturonosyl methyl ester](n) + n H2O = [(1-&gt;4)-alpha-D-galacturonosyl](n) + n methanol + n H(+). Its pathway is glycan metabolism; pectin degradation; 2-dehydro-3-deoxy-D-gluconate from pectin: step 1/5. Functionally, acts in the modification of cell walls via demethylesterification of cell wall pectin. In Arabidopsis thaliana (Mouse-ear cress), this protein is Probable pectinesterase/pectinesterase inhibitor 19 (PME19).